The sequence spans 29 residues: Protamine-like protein (29 aa).

Residues 1 to 29 (MRSFDQGSTRAPARERCRRQRPEGRSAQR) form a disordered region. A compositionally biased stretch (basic and acidic residues) spans 12–29 (PARERCRRQRPEGRSAQR).

In Escherichia coli (strain K12), this protein is Protamine-like protein (tpr).